A 684-amino-acid chain; its full sequence is Threonine--tRNA ligase (684 aa).

The TGS domain occupies 1–64; sequence MTAPNPSSLV…ESDTEVEPVA (64 aa). The interval 261–567 is catalytic; the sequence is DHRKLGVELD…LTEHYAGAFP (307 aa). Residues Cys-366, His-417, and His-544 each contribute to the Zn(2+) site.

It belongs to the class-II aminoacyl-tRNA synthetase family. In terms of assembly, homodimer. It depends on Zn(2+) as a cofactor.

It is found in the cytoplasm. It catalyses the reaction tRNA(Thr) + L-threonine + ATP = L-threonyl-tRNA(Thr) + AMP + diphosphate + H(+). Functionally, catalyzes the attachment of threonine to tRNA(Thr) in a two-step reaction: L-threonine is first activated by ATP to form Thr-AMP and then transferred to the acceptor end of tRNA(Thr). Also edits incorrectly charged L-seryl-tRNA(Thr). The sequence is that of Threonine--tRNA ligase from Mycobacteroides abscessus (strain ATCC 19977 / DSM 44196 / CCUG 20993 / CIP 104536 / JCM 13569 / NCTC 13031 / TMC 1543 / L948) (Mycobacterium abscessus).